The chain runs to 418 residues: Probable cysteine desulfurase 2 (418 aa).

Lysine 234 is modified (N6-(pyridoxal phosphate)lysine). Catalysis depends on cysteine 374, which acts as the Cysteine persulfide intermediate.

This sequence belongs to the class-V pyridoxal-phosphate-dependent aminotransferase family. Csd subfamily. Requires pyridoxal 5'-phosphate as cofactor.

It carries out the reaction (sulfur carrier)-H + L-cysteine = (sulfur carrier)-SH + L-alanine. Functionally, catalyzes the removal of elemental sulfur and selenium atoms from L-cysteine, L-cystine, L-selenocysteine, and L-selenocystine to produce L-alanine. The sequence is that of Probable cysteine desulfurase 2 (csd2) from Mycobacterium leprae (strain TN).